The following is a 290-amino-acid chain: Small ribosomal subunit protein uS2 (290 aa).

The disordered stretch occupies residues 269 to 290; the sequence is WEAEASGDWAAESAQPNPETKW.

It belongs to the universal ribosomal protein uS2 family. Component of the small ribosomal subunit. Mature ribosomes consist of a small (40S) and a large (60S) subunit. The 40S subunit contains about 33 different proteins and 1 molecule of RNA (18S). The 60S subunit contains about 49 different proteins and 3 molecules of RNA (25S, 5.8S and 5S). Interacts with rps21.

It localises to the cytoplasm. Its function is as follows. Required for the assembly and/or stability of the 40S ribosomal subunit. Required for the processing of the 20S rRNA-precursor to mature 18S rRNA in a late step of the maturation of 40S ribosomal subunits. This Talaromyces marneffei (strain ATCC 18224 / CBS 334.59 / QM 7333) (Penicillium marneffei) protein is Small ribosomal subunit protein uS2 (rps0).